We begin with the raw amino-acid sequence, 375 residues long: uncharacterized protein (375 aa).

One can recognise a Radical SAM core domain in the interval 78–302 (KKIEITSTIH…IFPNIRITSP (225 aa)). Cys-92, Cys-98, and Cys-101 together coordinate [4Fe-4S] cluster.

[4Fe-4S] cluster is required as a cofactor.

This is an uncharacterized protein from Methanocaldococcus jannaschii (strain ATCC 43067 / DSM 2661 / JAL-1 / JCM 10045 / NBRC 100440) (Methanococcus jannaschii).